The chain runs to 285 residues: Urease accessory protein UreD (285 aa).

It belongs to the UreD family. As to quaternary structure, ureD, UreF and UreG form a complex that acts as a GTP-hydrolysis-dependent molecular chaperone, activating the urease apoprotein by helping to assemble the nickel containing metallocenter of UreC. The UreE protein probably delivers the nickel.

It localises to the cytoplasm. In terms of biological role, required for maturation of urease via the functional incorporation of the urease nickel metallocenter. This is Urease accessory protein UreD from Azoarcus sp. (strain BH72).